Consider the following 568-residue polypeptide: Circadian clock protein KaiC2 (568 aa).

KaiC domains are found at residues 11–250 (IKCP…SVSQ) and 251–485 (ERIS…LTGT). Ser-423 and Ser-424 each carry phosphoserine; by autocatalysis.

This sequence belongs to the KaiC family. As to quaternary structure, multimerizes, probably forming homohexamers, no interaction with KaiC1 or KaiC3 is seen.

The enzyme catalyses L-seryl-[protein] + ATP = O-phospho-L-seryl-[protein] + ADP + H(+). It carries out the reaction L-threonyl-[protein] + ATP = O-phospho-L-threonyl-[protein] + ADP + H(+). The catalysed reaction is ATP + H2O = ADP + phosphate + H(+). Autophosphorylates independently of KaiA. This is Circadian clock protein KaiC2 from Synechocystis sp. (strain ATCC 27184 / PCC 6803 / Kazusa).